A 207-amino-acid polypeptide reads, in one-letter code: Thiamine-phosphate synthase (207 aa).

Residues 36–40 and Asn-68 each bind 4-amino-2-methyl-5-(diphosphooxymethyl)pyrimidine; that span reads QLRMK. 2 residues coordinate Mg(2+): Asp-69 and Asp-88. 4-amino-2-methyl-5-(diphosphooxymethyl)pyrimidine is bound at residue Ser-106. 132 to 134 lines the 2-[(2R,5Z)-2-carboxy-4-methylthiazol-5(2H)-ylidene]ethyl phosphate pocket; it reads TNT. Lys-135 provides a ligand contact to 4-amino-2-methyl-5-(diphosphooxymethyl)pyrimidine. 2-[(2R,5Z)-2-carboxy-4-methylthiazol-5(2H)-ylidene]ethyl phosphate-binding positions include Gly-162 and 182-183; that span reads VS.

This sequence belongs to the thiamine-phosphate synthase family. The cofactor is Mg(2+).

It catalyses the reaction 2-[(2R,5Z)-2-carboxy-4-methylthiazol-5(2H)-ylidene]ethyl phosphate + 4-amino-2-methyl-5-(diphosphooxymethyl)pyrimidine + 2 H(+) = thiamine phosphate + CO2 + diphosphate. The catalysed reaction is 2-(2-carboxy-4-methylthiazol-5-yl)ethyl phosphate + 4-amino-2-methyl-5-(diphosphooxymethyl)pyrimidine + 2 H(+) = thiamine phosphate + CO2 + diphosphate. The enzyme catalyses 4-methyl-5-(2-phosphooxyethyl)-thiazole + 4-amino-2-methyl-5-(diphosphooxymethyl)pyrimidine + H(+) = thiamine phosphate + diphosphate. It participates in cofactor biosynthesis; thiamine diphosphate biosynthesis; thiamine phosphate from 4-amino-2-methyl-5-diphosphomethylpyrimidine and 4-methyl-5-(2-phosphoethyl)-thiazole: step 1/1. Functionally, condenses 4-methyl-5-(beta-hydroxyethyl)thiazole monophosphate (THZ-P) and 2-methyl-4-amino-5-hydroxymethyl pyrimidine pyrophosphate (HMP-PP) to form thiamine monophosphate (TMP). This chain is Thiamine-phosphate synthase, found in Methanococcus maripaludis (strain C6 / ATCC BAA-1332).